Reading from the N-terminus, the 105-residue chain is Large ribosomal subunit protein eL36 (105 aa).

Positions methionine 1–serine 36 are disordered. The segment covering arginine 27–serine 36 has biased composition (basic residues).

Belongs to the eukaryotic ribosomal protein eL36 family. In terms of assembly, component of the large ribosomal subunit (LSU).

It is found in the cytoplasm. In terms of biological role, component of the ribosome, a large ribonucleoprotein complex responsible for the synthesis of proteins in the cell. The small ribosomal subunit (SSU) binds messenger RNAs (mRNAs) and translates the encoded message by selecting cognate aminoacyl-transfer RNA (tRNA) molecules. The large subunit (LSU) contains the ribosomal catalytic site termed the peptidyl transferase center (PTC), which catalyzes the formation of peptide bonds, thereby polymerizing the amino acids delivered by tRNAs into a polypeptide chain. The nascent polypeptides leave the ribosome through a tunnel in the LSU and interact with protein factors that function in enzymatic processing, targeting, and the membrane insertion of nascent chains at the exit of the ribosomal tunnel. This chain is Large ribosomal subunit protein eL36, found in Emericella nidulans (strain FGSC A4 / ATCC 38163 / CBS 112.46 / NRRL 194 / M139) (Aspergillus nidulans).